The chain runs to 180 residues: Endoribonuclease YbeY (180 aa).

Positions 118, 122, and 128 each coordinate Zn(2+).

It belongs to the endoribonuclease YbeY family. It depends on Zn(2+) as a cofactor.

Its subcellular location is the cytoplasm. Single strand-specific metallo-endoribonuclease involved in late-stage 70S ribosome quality control and in maturation of the 3' terminus of the 16S rRNA. In Rhodococcus jostii (strain RHA1), this protein is Endoribonuclease YbeY.